The primary structure comprises 88 residues: AVDAYDDDDNLKNEEGDYYNESDDGYSGDEEEEEKQEEDEQDDDDLQFDDGVPEDPISTLKCFSFNSVGTGSPCIFGVPVPAIRQVHS.

The segment at 1 to 54 is disordered; sequence AVDAYDDDDNLKNEEGDYYNESDDGYSGDEEEEEKQEEDEQDDDDLQFDDGVPE. The segment covering 16 to 53 has biased composition (acidic residues); that stretch reads GDYYNESDDGYSGDEEEEEKQEEDEQDDDDLQFDDGVP.

Predominantly in developing fruit.

This is an uncharacterized protein from Fragaria ananassa (Strawberry).